We begin with the raw amino-acid sequence, 546 residues long: Probable ATP-dependent RNA helicase DDX56 (546 aa).

The Q motif motif lies at 7 to 35 (LGFEHMGLDHRLLQAVTDLGWSRPTLIQE). One can recognise a Helicase ATP-binding domain in the interval 38-218 (IPLALEGKDL…ELVLHNPVTL (181 aa)). Residue 51 to 58 (ARTGSGKT) coordinates ATP. A Phosphoserine modification is found at Ser126. Phosphothreonine is present on Thr141. Residues 166-169 (DEAD) carry the DEAD box motif. The Helicase C-terminal domain maps to 230 to 424 (QLQQFQVVCE…PYQFHMEEIE (195 aa)). 2 disordered regions span residues 323–342 (PVKG…SDPE) and 504–546 (LVHP…AAPS). The span at 505–524 (VHPHKKRKKPLASKKAKKAK) shows a compositional bias: basic residues. The residue at position 531 (Ser531) is a Phosphoserine.

It belongs to the DEAD box helicase family. DDX56/DBP9 subfamily. In terms of assembly, may form homooligomeric complexes. Interacts with IRF3. Interacts with OCT4 and POU5F1.

The protein localises to the nucleus. The protein resides in the nucleolus. It catalyses the reaction ATP + H2O = ADP + phosphate + H(+). Nucleolar RNA helicase that plays a role in various biological processes including innate immunity, ribosome biogenesis or nucleolus organization. Plays an essential role in maintaining nucleolar integrity in planarian stem cells. Maintains embryonic stem cells proliferation by conventional regulation of ribosome assembly and interaction with OCT4 and POU5F1 complex. Regulates antiviral innate immunity by inhibiting the virus-triggered signaling nuclear translocation of IRF3. Mechanistically, acts by disrupting the interaction between IRF3 and importin IPO5. May play a role in later stages of the processing of the pre-ribosomal particles leading to mature 60S ribosomal subunits. Has intrinsic ATPase activity. The polypeptide is Probable ATP-dependent RNA helicase DDX56 (DDX56) (Bos taurus (Bovine)).